The primary structure comprises 234 residues: Orotidine 5'-phosphate decarboxylase (234 aa).

Residues aspartate 14, lysine 36, 63 to 72, threonine 123, arginine 184, glutamine 193, glycine 213, and arginine 214 each bind substrate; that span reads DLKFHDIPNT. Catalysis depends on lysine 65, which acts as the Proton donor.

It belongs to the OMP decarboxylase family. Type 1 subfamily. In terms of assembly, homodimer.

It carries out the reaction orotidine 5'-phosphate + H(+) = UMP + CO2. It functions in the pathway pyrimidine metabolism; UMP biosynthesis via de novo pathway; UMP from orotate: step 2/2. Its function is as follows. Catalyzes the decarboxylation of orotidine 5'-monophosphate (OMP) to uridine 5'-monophosphate (UMP). The chain is Orotidine 5'-phosphate decarboxylase from Pseudoalteromonas translucida (strain TAC 125).